The chain runs to 450 residues: Phosphoglucosamine mutase (450 aa).

S97 serves as the catalytic Phosphoserine intermediate. Positions 97, 236, 238, and 240 each coordinate Mg(2+). S97 bears the Phosphoserine mark.

It belongs to the phosphohexose mutase family. Mg(2+) serves as cofactor. In terms of processing, activated by phosphorylation.

The catalysed reaction is alpha-D-glucosamine 1-phosphate = D-glucosamine 6-phosphate. In terms of biological role, catalyzes the conversion of glucosamine-6-phosphate to glucosamine-1-phosphate. The sequence is that of Phosphoglucosamine mutase from Prochlorococcus marinus (strain AS9601).